The chain runs to 481 residues: Keratin, type II cuticular Hb1 (481 aa).

The segment at 1–106 is head; it reads MTCGSGFCGR…PNAQCVKHEE (106 aa). An IF rod domain is found at 106–417; the sequence is EKEQIKCLNS…RLLEGEEQRL (312 aa). Residues 107–141 are coil 1A; it reads KEQIKCLNSKFAAFIDKVRFLEQQNKLLETKWQFY. Positions 142–151 are linker 1; that stretch reads QNRKCCESNM. The tract at residues 152–252 is coil 1B; the sequence is EPLFEGYIEA…YDEETRILHS (101 aa). Residue K212 forms a Glycyl lysine isopeptide (Lys-Gly) (interchain with G-Cter in SUMO1) linkage. Positions 253-269 are linker 12; the sequence is HISDTSIVVKMDNSRDL. Positions 270–413 are coil 2; it reads NMDCVVAEIK…TTYRRLLEGE (144 aa). The interval 414-481 is tail; the sequence is EQRLCEGVGA…GSAVSCGRKC (68 aa).

This sequence belongs to the intermediate filament family. Heterotetramer of two type I and two type II keratins. In terms of tissue distribution, expressed in dorsal skin.

The chain is Keratin, type II cuticular Hb1 from Mus musculus (Mouse).